The sequence spans 291 residues: G1/S-specific cyclin-D2 (291 aa).

Positions 261-291 (TRQQTQQRNSSKSVDELDQASTPTDVQDINL) are disordered. Over residues 279–291 (QASTPTDVQDINL) the composition is skewed to polar residues. Thr282 is modified (phosphothreonine).

This sequence belongs to the cyclin family. Cyclin D subfamily. In terms of assembly, interacts with the cdk4 and cdk6 protein kinases to form a serine/threonine kinase holoenzyme complex. The cyclin subunit imparts substrate specificity to the complex. In terms of processing, phosphorylation at Thr-282 by MAP kinases is required for ubiquitination and degradation by the DCX(AMBRA1) complex. Ubiquitinated by the DCX(AMBRA1) complex during the transition from G1 to S cell phase, leading to its degradation: ubiquitination is dependent on Thr-282 phosphorylation. The DCX(AMBRA1) complex represents the major regulator of CCND2 stability during the G1/S transition.

The protein localises to the nucleus. It is found in the cytoplasm. Its subcellular location is the nucleus membrane. Its function is as follows. Regulatory component of the cyclin D2-CDK4 (DC) complex that phosphorylates and inhibits members of the retinoblastoma (RB) protein family including RB1 and regulates the cell-cycle during G(1)/S transition. Phosphorylation of RB1 allows dissociation of the transcription factor E2F from the RB/E2F complex and the subsequent transcription of E2F target genes which are responsible for the progression through the G(1) phase. Hypophosphorylates RB1 in early G(1) phase. Cyclin D-CDK4 complexes are major integrators of various mitogenenic and antimitogenic signals. The protein is G1/S-specific cyclin-D2 (ccnd2) of Xenopus laevis (African clawed frog).